We begin with the raw amino-acid sequence, 726 residues long: Long-chain-alcohol oxidase FAO4A (726 aa).

A helical transmembrane segment spans residues 103-119; it reads ILLNWSSSYFSLLRMLF. 224–239 is an FAD binding site; that stretch reads CDAVVVGSGSGGGVAA. Residue His-659 is the Proton acceptor of the active site.

It belongs to the GMC oxidoreductase family.

The protein resides in the membrane. The catalysed reaction is a long-chain primary fatty alcohol + O2 = a long-chain fatty aldehyde + H2O2. Long-chain fatty alcohol oxidase involved in the omega-oxidation pathway of lipid degradation. The chain is Long-chain-alcohol oxidase FAO4A (FAO4A) from Arabidopsis thaliana (Mouse-ear cress).